Reading from the N-terminus, the 968-residue chain is RNA polymerase-associated protein RapA (968 aa).

Positions 163-332 (EVGRRYAPRV…FARLRLLDPD (170 aa)) constitute a Helicase ATP-binding domain. 176–183 (DEVGLGKT) lines the ATP pocket. A DEAH box motif is present at residues 278–281 (DEAH). One can recognise a Helicase C-terminal domain in the interval 491-643 (RVDWLIAFLK…ELTCPSGHVL (153 aa)).

It belongs to the SNF2/RAD54 helicase family. RapA subfamily. Interacts with the RNAP. Has a higher affinity for the core RNAP than for the holoenzyme. Its ATPase activity is stimulated by binding to RNAP.

Its function is as follows. Transcription regulator that activates transcription by stimulating RNA polymerase (RNAP) recycling in case of stress conditions such as supercoiled DNA or high salt concentrations. Probably acts by releasing the RNAP, when it is trapped or immobilized on tightly supercoiled DNA. Does not activate transcription on linear DNA. Probably not involved in DNA repair. The sequence is that of RNA polymerase-associated protein RapA from Shewanella putrefaciens (strain CN-32 / ATCC BAA-453).